The following is a 638-amino-acid chain: Eukaryotic translation initiation factor 2A (638 aa).

WD repeat units follow at residues 287 to 329 and 331 to 370; these read SKEG…FDFG and GPRN…KLAN. Positions 441–450 are enriched in basic and acidic residues; sequence KITKAKHEGI. A disordered region spans residues 441–593; that stretch reads KITKAKHEGI…SDKERKIRSV (153 aa). Residue Thr463 is modified to Phosphothreonine. The segment covering 492–501 has biased composition (low complexity); that stretch reads AAAGGVNGNK. A compositionally biased stretch (basic and acidic residues) spans 583 to 593; that stretch reads ISDKERKIRSV.

It belongs to the WD repeat EIF2A family.

Functions in the early steps of protein synthesis of a small number of specific mRNAs. Acts by directing the binding of methionyl-tRNAi to 40S ribosomal subunits. In contrast to the eIF-2 complex, it binds methionyl-tRNAi to 40S subunits in a codon-dependent manner, whereas the eIF-2 complex binds methionyl-tRNAi to 40S subunits in a GTP-dependent manner. This Drosophila melanogaster (Fruit fly) protein is Eukaryotic translation initiation factor 2A.